We begin with the raw amino-acid sequence, 94 residues long: MDKSKRLFLKSKRSFRRRLPPIQSGDRIDYRNMSLISRFISEQGKILSRRVNRLSLKQQRLITIAIKQARILSSLPFLNNEKQFEKKRVGRYNY.

The protein belongs to the bacterial ribosomal protein bS18 family. As to quaternary structure, part of the 30S ribosomal subunit.

The protein resides in the plastid. It is found in the chloroplast. This Manihot esculenta (Cassava) protein is Small ribosomal subunit protein bS18c.